The following is a 374-amino-acid chain: DNA-directed RNA polymerase subunit alpha (374 aa).

The tract at residues 1–257 (MSDNAHNLLY…KHFSIFENMD (257 aa)) is alpha N-terminal domain (alpha-NTD). The interval 274 to 374 (KDDILHKLIL…EKIRAKNIKG (101 aa)) is alpha C-terminal domain (alpha-CTD).

It belongs to the RNA polymerase alpha chain family. In terms of assembly, homodimer. The RNAP catalytic core consists of 2 alpha, 1 beta, 1 beta' and 1 omega subunit. When a sigma factor is associated with the core the holoenzyme is formed, which can initiate transcription.

The enzyme catalyses RNA(n) + a ribonucleoside 5'-triphosphate = RNA(n+1) + diphosphate. Functionally, DNA-dependent RNA polymerase catalyzes the transcription of DNA into RNA using the four ribonucleoside triphosphates as substrates. This is DNA-directed RNA polymerase subunit alpha from Chlamydia pneumoniae (Chlamydophila pneumoniae).